Consider the following 344-residue polypeptide: DNA-directed RNA polymerase subunit alpha (344 aa).

The alpha N-terminal domain (alpha-NTD) stretch occupies residues 1 to 238; sequence MKVIKTAPLI…KQLGVFGERP (238 aa). The tract at residues 254–344 is alpha C-terminal domain (alpha-CTD); that stretch reads AKDLSAKIES…EKLEDKGGND (91 aa).

Belongs to the RNA polymerase alpha chain family. In terms of assembly, homodimer. The RNAP catalytic core consists of 2 alpha, 1 beta, 1 beta' and 1 omega subunit. When a sigma factor is associated with the core the holoenzyme is formed, which can initiate transcription.

It catalyses the reaction RNA(n) + a ribonucleoside 5'-triphosphate = RNA(n+1) + diphosphate. Functionally, DNA-dependent RNA polymerase catalyzes the transcription of DNA into RNA using the four ribonucleoside triphosphates as substrates. The chain is DNA-directed RNA polymerase subunit alpha from Helicobacter pylori (strain J99 / ATCC 700824) (Campylobacter pylori J99).